A 338-amino-acid chain; its full sequence is MPFCHNIINISCVKNNWSNDVRASLYSLMALIILTTLVGNLIVIVSISHFKQLHTPTNWLIHSMATVDFLLGCLVMPYSMVRSAEHCWYFGEVFCKIHTSTDIMLSSASIFHLSFISIDRYYAVCDPLRYKAKINILVVCVMIFISWSVPAVFAFGMIFLELNFKGAEEIYYKHVHCRGGCSVFFSKISGVLAFMTSFYIPGSIMLCIYYRIYLIAKEQARSINDANQKLQIGLEMKNGISQSKERKAVKTLGIVMGVFLICWCPFFVCTVIDPFLHYTIPPTLNDVLIWFGYLNSTFNPMVYAFFYPWFRKALKMILFGKIFQKDSSRCKLFLESSS.

Residues 1-24 (MPFCHNIINISCVKNNWSNDVRAS) lie on the Extracellular side of the membrane. Intrachain disulfides connect Cys4–Cys177, Cys12–Cys87, and Cys95–Cys181. N-linked (GlcNAc...) asparagine glycans are attached at residues Asn9 and Asn16. Residues 25–45 (LYSLMALIILTTLVGNLIVIV) traverse the membrane as a helical segment. Over 46 to 58 (SISHFKQLHTPTN) the chain is Cytoplasmic. Residues 59–79 (WLIHSMATVDFLLGCLVMPYS) traverse the membrane as a helical segment. Topologically, residues 80–97 (MVRSAEHCWYFGEVFCKI) are extracellular. Residues 98-118 (HTSTDIMLSSASIFHLSFISI) form a helical membrane-spanning segment. Asp102 contacts 2-phenylethylamine. Topologically, residues 119–135 (DRYYAVCDPLRYKAKIN) are cytoplasmic. The chain crosses the membrane as a helical span at residues 136–156 (ILVVCVMIFISWSVPAVFAFG). Topologically, residues 157–187 (MIFLELNFKGAEEIYYKHVHCRGGCSVFFSK) are extracellular. Residues 188 to 208 (ISGVLAFMTSFYIPGSIMLCI) traverse the membrane as a helical segment. Over 209–251 (YYRIYLIAKEQARSINDANQKLQIGLEMKNGISQSKERKAVKT) the chain is Cytoplasmic. Residues 252 to 272 (LGIVMGVFLICWCPFFVCTVI) form a helical membrane-spanning segment. The Extracellular segment spans residues 273 to 286 (DPFLHYTIPPTLND). A helical membrane pass occupies residues 287-307 (VLIWFGYLNSTFNPMVYAFFY). Residues 308–338 (PWFRKALKMILFGKIFQKDSSRCKLFLESSS) lie on the Cytoplasmic side of the membrane.

This sequence belongs to the G-protein coupled receptor 1 family.

The protein resides in the endomembrane system. It localises to the endoplasmic reticulum membrane. The protein localises to the cell membrane. Its function is as follows. Intracellular G-protein coupled receptor for trace amines, which recognizes endogenous amine-containing metabolites such as beta-phenylethylamine (beta-PEA), 3-iodothyronamine (T1AM), isoamylamine (IAA), cadaverine (CAD), cyclohexylamine (CHA), p-tyramine (p-TYR), trimethylamine (TMA), octopamine and tryptamine. Also functions as a receptor for various drugs and psychoactive substances, such as amphetamine and methamphetamine. Unresponsive to classical biogenic amines, such as epinephrine and histamine and only partially activated by dopamine and serotonin. Expressed in both the central and peripheral nervous system: TAAR1 activation regulates the activity of several neurotransmitter signaling pathways by (1) decreasing the basal firing rates of the neurons involved and by (2) lowering the sensitivity of receptors to neurotransmitters. Ligand binding causes a conformation change that triggers signaling via guanine nucleotide-binding proteins (G proteins) and modulates the activity of downstream effectors. TAAR1 is coupled with different G(i)/G(o)-, G(s)- or G(q)/G(11) classes of G alpha proteins depending on the ligand. CAD-binding is coupled to G(i)/G(o) G alpha proteins and mediates inhibition of adenylate cyclase activity. T1AM- or beta-PEA-binding is coupled to G(s) G alpha proteins and mediates activation of adenylate cyclase activity. CHA- or IAA-binding is coupled to G(q)/G(11) G alpha proteins and activates phospholipase C-beta, releasing diacylglycerol (DAG) and inositol 1,4,5-trisphosphate (IP3) second messengers. TMA-binding is coupled with all three G(i)/G(o)-, G(s)- or G(q)/G(11) G alpha protein subtypes. This chain is Trace amine-associated receptor 1 (TAAR1), found in Macaca mulatta (Rhesus macaque).